The primary structure comprises 266 residues: rRNA adenine N-6-methyltransferase (266 aa).

Residues H14, T16, G41, E62, D87, and N103 each coordinate S-adenosyl-L-methionine.

The protein belongs to the class I-like SAM-binding methyltransferase superfamily. rRNA adenine N(6)-methyltransferase family.

Its function is as follows. Involved in erythromycin resistance. In Bacteroides fragilis, this protein is rRNA adenine N-6-methyltransferase (ermFU).